Reading from the N-terminus, the 82-residue chain is Probable acyl carrier protein IacP (82 aa).

Residues 3–78 (MDIEARVKKV…DICRVVKKSL (76 aa)) enclose the Carrier domain. At Ser-38 the chain carries O-(pantetheine 4'-phosphoryl)serine.

Post-translationally, 4'-phosphopantetheine is transferred from CoA to a specific serine of apo-IacP.

The protein resides in the cytoplasm. Functionally, acyl carrier protein. The chain is Probable acyl carrier protein IacP (iacP) from Salmonella typhimurium (strain SL1344).